The chain runs to 73 residues: UPF0235 protein SYO3AOP1_0257 (73 aa).

The protein belongs to the UPF0235 family.

The sequence is that of UPF0235 protein SYO3AOP1_0257 from Sulfurihydrogenibium sp. (strain YO3AOP1).